We begin with the raw amino-acid sequence, 367 residues long: MNIKTRTKKILQKAMDEPITKEEALYLMGVTGRDLQALMIAADMVREAEAGDRITYIENWNINFTNICSGQCGFCAFKRDAADGDSYYLETERILEIAAEAIEKGARELCIQGGLYPGLDTYFYEDLIRAIKSEFPDVHLHSFSPMEVYYGAQNAELTVEEALKILKRAGLGSMPGTAAEILDDDVRAVICPTKLSTGEWVEVIETAHRVGIPTTCTMMYGHIDGPEHRVEHMDILRRIQEKTGGFTEFVPLPFMHPHAPIYREGLAMPGATGADDLKVYAISRLMFRGLIENIQASWVKLGFKFAQVALLSGANDIGGTLGEENISKSAGASHGVRTEPEEIIRVVRDIGRIPARRDTLYREIEDV.

The 235-residue stretch at 54 to 288 (ITYIENWNIN…VYAISRLMFR (235 aa)) folds into the Radical SAM core domain. The [4Fe-4S] cluster site is built by cysteine 68, cysteine 72, and cysteine 75.

The protein belongs to the radical SAM superfamily. CofH family. In terms of assembly, consists of two subunits, CofG and CofH. It depends on [4Fe-4S] cluster as a cofactor.

It carries out the reaction 5-amino-6-(D-ribitylamino)uracil + L-tyrosine + S-adenosyl-L-methionine = 5-amino-5-(4-hydroxybenzyl)-6-(D-ribitylimino)-5,6-dihydrouracil + 2-iminoacetate + 5'-deoxyadenosine + L-methionine + H(+). It participates in cofactor biosynthesis; coenzyme F0 biosynthesis. Catalyzes the radical-mediated synthesis of 5-amino-5-(4-hydroxybenzyl)-6-(D-ribitylimino)-5,6-dihydrouracil from 5-amino-6-(D-ribitylamino)uracil and L-tyrosine. The sequence is that of 5-amino-6-(D-ribitylamino)uracil--L-tyrosine 4-hydroxyphenyl transferase from Methanothermobacter thermautotrophicus (strain ATCC 29096 / DSM 1053 / JCM 10044 / NBRC 100330 / Delta H) (Methanobacterium thermoautotrophicum).